The primary structure comprises 717 residues: Glycine--tRNA ligase beta subunit (717 aa).

This sequence belongs to the class-II aminoacyl-tRNA synthetase family. In terms of assembly, tetramer of two alpha and two beta subunits.

The protein resides in the cytoplasm. The catalysed reaction is tRNA(Gly) + glycine + ATP = glycyl-tRNA(Gly) + AMP + diphosphate. The sequence is that of Glycine--tRNA ligase beta subunit from Agrobacterium fabrum (strain C58 / ATCC 33970) (Agrobacterium tumefaciens (strain C58)).